A 289-amino-acid chain; its full sequence is ATP synthase gamma chain (289 aa).

This sequence belongs to the ATPase gamma chain family. As to quaternary structure, F-type ATPases have 2 components, CF(1) - the catalytic core - and CF(0) - the membrane proton channel. CF(1) has five subunits: alpha(3), beta(3), gamma(1), delta(1), epsilon(1). CF(0) has three main subunits: a, b and c.

The protein resides in the cell inner membrane. Its function is as follows. Produces ATP from ADP in the presence of a proton gradient across the membrane. The gamma chain is believed to be important in regulating ATPase activity and the flow of protons through the CF(0) complex. This chain is ATP synthase gamma chain, found in Halorhodospira halophila (strain DSM 244 / SL1) (Ectothiorhodospira halophila (strain DSM 244 / SL1)).